The primary structure comprises 82 residues: Chaplin-E (82 aa).

The first 27 residues, 1–27 (MKNLKKAAAVTMVAGGLIAAGAGMASA), serve as a signal peptide directing secretion. The Chaplin domain maps to 41–81 (SPGVASGNLVQAPIHIPVNAVGNSVNVIGVLNPAFGNLGVN).

This sequence belongs to the chaplin family. Short chaplin subfamily.

The protein resides in the cell surface. It is found in the secreted. It localises to the cell wall. The protein localises to the fimbrium. Its function is as follows. One of 8 partially redundant surface-active proteins required for efficient formation of aerial mycelium; the short chaplins assemble into a hydrophobic, amyloidal fibrillar surface layer that envelopes and protects aerial hyphae and spores, presumably anchored to the long chaplins. Chaplins have an overlapping function with the surface-active SapB peptide; chaplins are essential on minimal medium while on rich medium both chaplins and SapB are required for efficient aerial hyphae formation. Chaplins are also involved in cell attachment to a hydrophobic surface. Forms amyloid fibrils in vitro probably composed of stacked beta-sheets, at low extracellular concentrations individually restores the ability to form aerial hyphae to a chaplin-deficient strain, but does so less well than other short chaplins. A small chaplin extract (ChpD, ChpE, ChpF, ChpG and ChpH) self-assembles into 2 different amyloids; small fibrils at the air-water interface form an amphipathic membrane that resembles spore-surface structures involved in aerial hyphae formation, and hydrophilic fibrils in solution that resemble the fibers that attach cells to a hydrophobic surface. At the air-water interface the hydrophilic surface is in contact with water (probably equivalent to the peptidoglycan layer), while the hydrophobic face is exposed to the air, making the surface of the aerial hyphae hydrophobic. A minimal chaplin strain capable of forming aerial mycelium/hyphae on minimal medium contains ChpC, ChpE and ChpH. The strain also has restored rodlet formation on the hyphae surface. A second strain with ChpA, ChpD and ChpE makes slightly less robust hyphae. This essential chaplin may coordinate the assembly and/or polymerization of the other chaplins. A small chaplin extract applied to a chaplin-deficient strain restores aerial hyphae formation. The small chaplin extract forms an amyloid-like structure similar to that seen on the surface of cells without rodlets (rdlA-rdlB deletions), and is highly surface active, reducing surface tension from 72 to 26 mJ/m(2), which probably allows escape of hyphae from an aqueous environment into air. The chain is Chaplin-E from Streptomyces coelicolor (strain ATCC BAA-471 / A3(2) / M145).